The primary structure comprises 208 residues: Small ribosomal subunit protein bS6 (208 aa).

2 disordered regions span residues 121-143 (SENNPDNPDAPVTSGLASVKPRL) and 185-208 (NQQTSQANNNQPRFQNQFKKGAKP). Positions 185 to 195 (NQQTSQANNNQ) are enriched in low complexity.

This sequence belongs to the bacterial ribosomal protein bS6 family.

Functionally, binds together with bS18 to 16S ribosomal RNA. This Mycoplasma genitalium (strain ATCC 33530 / DSM 19775 / NCTC 10195 / G37) (Mycoplasmoides genitalium) protein is Small ribosomal subunit protein bS6 (rpsF).